The following is a 72-amino-acid chain: Conotoxin VnMKLT2-021 (72 aa).

The first 22 residues, 1–22 (MKLTCVLIVAVLFLTACQLTTA), serve as a signal peptide directing secretion. Residues 23–45 (ASYARSERQHPDLGSSDQNSKLT) constitute a propeptide that is removed on maturation. Disulfide bonds link cysteine 48-cysteine 62, cysteine 55-cysteine 66, and cysteine 61-cysteine 71.

This sequence belongs to the conotoxin O1 superfamily. Expressed by the venom duct.

It localises to the secreted. This is Conotoxin VnMKLT2-021 from Conus ventricosus (Mediterranean cone).